The primary structure comprises 469 residues: Glutamate--tRNA ligase (469 aa).

The 'HIGH' region signature appears at 9–19 (PSPTGFLHVGG). Cys98, Cys100, Cys125, and Asp127 together coordinate Zn(2+). Positions 236–240 (KLSKR) match the 'KMSKS' region motif. Residue Lys239 participates in ATP binding.

Belongs to the class-I aminoacyl-tRNA synthetase family. Glutamate--tRNA ligase type 1 subfamily. Monomer. The cofactor is Zn(2+).

It localises to the cytoplasm. It catalyses the reaction tRNA(Glu) + L-glutamate + ATP = L-glutamyl-tRNA(Glu) + AMP + diphosphate. Catalyzes the attachment of glutamate to tRNA(Glu) in a two-step reaction: glutamate is first activated by ATP to form Glu-AMP and then transferred to the acceptor end of tRNA(Glu). The chain is Glutamate--tRNA ligase from Shewanella sp. (strain W3-18-1).